The chain runs to 143 residues: uncharacterized protein (143 aa).

Residues 1 to 21 form a disordered region; it reads MAAMDTGQRADPSNPGDKEGD.

This is an uncharacterized protein from Homo sapiens (Human).